Reading from the N-terminus, the 1270-residue chain is DNA-directed RNA polymerase subunit beta (1270 aa).

Belongs to the RNA polymerase beta chain family. As to quaternary structure, the RNAP catalytic core consists of 2 alpha, 1 beta, 1 beta' and 1 omega subunit. When a sigma factor is associated with the core the holoenzyme is formed, which can initiate transcription.

It carries out the reaction RNA(n) + a ribonucleoside 5'-triphosphate = RNA(n+1) + diphosphate. DNA-dependent RNA polymerase catalyzes the transcription of DNA into RNA using the four ribonucleoside triphosphates as substrates. This is DNA-directed RNA polymerase subunit beta from Bacteroides fragilis (strain ATCC 25285 / DSM 2151 / CCUG 4856 / JCM 11019 / LMG 10263 / NCTC 9343 / Onslow / VPI 2553 / EN-2).